The primary structure comprises 256 residues: Small ribosomal subunit protein eS1A (256 aa).

Alanine 2 is subject to N-acetylalanine; partial.

Belongs to the eukaryotic ribosomal protein eS1 family. As to quaternary structure, component of the small ribosomal subunit. Mature ribosomes consist of a small (40S) and a large (60S) subunit. The 40S subunit contains about 33 different proteins and 1 molecule of RNA (18S). The 60S subunit contains about 49 different proteins and 3 molecules of RNA (25S, 5.8S and 5S).

It is found in the cytoplasm. The sequence is that of Small ribosomal subunit protein eS1A from Debaryomyces hansenii (strain ATCC 36239 / CBS 767 / BCRC 21394 / JCM 1990 / NBRC 0083 / IGC 2968) (Yeast).